A 274-amino-acid polypeptide reads, in one-letter code: Proteasome subunit beta type-7-B (274 aa).

The propeptide at 1-37 (MSQSSVDIPPKGGFSFDLCKRNDMLTQKGLKAPSFLK) is removed in mature form. The active-site Nucleophile is the T40.

Belongs to the peptidase T1B family. In terms of assembly, component of the 20S core complex of the 26S proteasome. The 26S proteasome is composed of a core protease (CP), known as the 20S proteasome, capped at one or both ends by the 19S regulatory particle (RP/PA700). The 20S proteasome core is composed of 28 subunits that are arranged in four stacked rings, resulting in a barrel-shaped structure. The two end rings are each formed by seven alpha subunits, and the two central rings are each formed by seven beta subunits. The catalytic chamber with the active sites is on the inside of the barrel.

It is found in the cytoplasm. The protein localises to the nucleus. It catalyses the reaction Cleavage of peptide bonds with very broad specificity.. The proteasome is a multicatalytic proteinase complex which is characterized by its ability to cleave peptides with Arg, Phe, Tyr, Leu, and Glu adjacent to the leaving group at neutral or slightly basic pH. The proteasome has an ATP-dependent proteolytic activity. The protein is Proteasome subunit beta type-7-B (PBB2) of Arabidopsis thaliana (Mouse-ear cress).